Reading from the N-terminus, the 105-residue chain is Large ribosomal subunit protein uL24 (105 aa).

The protein belongs to the universal ribosomal protein uL24 family. In terms of assembly, part of the 50S ribosomal subunit.

Its function is as follows. One of two assembly initiator proteins, it binds directly to the 5'-end of the 23S rRNA, where it nucleates assembly of the 50S subunit. In terms of biological role, one of the proteins that surrounds the polypeptide exit tunnel on the outside of the subunit. The protein is Large ribosomal subunit protein uL24 of Staphylococcus aureus (strain Mu3 / ATCC 700698).